The following is a 336-amino-acid chain: Fructose-1,6-bisphosphatase class 1 (336 aa).

Mg(2+) contacts are provided by E90, D112, L114, and D115. Substrate is bound by residues 115 to 118, N207, and K273; that span reads DGSS. E279 contributes to the Mg(2+) binding site.

The protein belongs to the FBPase class 1 family. Homotetramer. Requires Mg(2+) as cofactor.

Its subcellular location is the cytoplasm. The enzyme catalyses beta-D-fructose 1,6-bisphosphate + H2O = beta-D-fructose 6-phosphate + phosphate. Its pathway is carbohydrate biosynthesis; gluconeogenesis. This Xanthomonas euvesicatoria pv. vesicatoria (strain 85-10) (Xanthomonas campestris pv. vesicatoria) protein is Fructose-1,6-bisphosphatase class 1.